Reading from the N-terminus, the 177-residue chain is uncharacterized protein (177 aa).

Residues 1–175 (MYKNPYGLEI…VFKSIFNSIL (175 aa)) form the Macro domain.

This is an uncharacterized protein from Saccharolobus solfataricus (strain ATCC 35092 / DSM 1617 / JCM 11322 / P2) (Sulfolobus solfataricus).